Here is a 183-residue protein sequence, read N- to C-terminus: Adenine phosphoribosyltransferase (183 aa).

Belongs to the purine/pyrimidine phosphoribosyltransferase family. Homodimer.

It is found in the cytoplasm. It catalyses the reaction AMP + diphosphate = 5-phospho-alpha-D-ribose 1-diphosphate + adenine. The protein operates within purine metabolism; AMP biosynthesis via salvage pathway; AMP from adenine: step 1/1. Its function is as follows. Catalyzes a salvage reaction resulting in the formation of AMP, that is energically less costly than de novo synthesis. The protein is Adenine phosphoribosyltransferase of Salmonella gallinarum (strain 287/91 / NCTC 13346).